We begin with the raw amino-acid sequence, 89 residues long: MACPLDQAIGLLVAIFHKYSGKEGDKHTLSKKELKELIQKELTIGSKLQDAEIARLMDDLDRNKDQEVNFQEYVAFLGALALIYNEALK.

EF-hand domains lie at 12–47 (LVAI…IGSK) and 48–83 (LQDA…LALI). Residues threonine 28 and glutamate 33 each coordinate Ca(2+). Lysine 40 is subject to N6-acetyllysine. Residue serine 46 is modified to Phosphoserine. Lysine 47 is subject to N6-acetyllysine; alternate. Lysine 47 is subject to N6-succinyllysine; alternate. The Ca(2+) site is built by aspartate 61, asparagine 63, aspartate 65, glutamate 67, and glutamate 72.

Belongs to the S-100 family. As to quaternary structure, homodimer; head to tail assembly of 2 subunits. Interacts with CACYBP in a calcium-dependent manner. Interacts with ANXA2 and ANXA11 (via N-terminus). Interacts with SUGT1. Interacts with TP53; has higher affinity for TP53 that is phosphorylated on its N-terminal domain, and lower affinity for TP53 that is phosphorylated on its C-terminal domain. Interacts with tropomyosin. Interacts with FKBP4. Interacts with PPP5C (via TPR repeats); the interaction is calcium-dependent and modulates PPP5C activity. Interacts with TPPP; this interaction inhibits TPPP dimerization.

It localises to the nucleus envelope. The protein localises to the cytoplasm. Its subcellular location is the cell membrane. In terms of biological role, may function as calcium sensor and modulator, contributing to cellular calcium signaling. May function by interacting with other proteins, such as TPR-containing proteins, and indirectly play a role in many physiological processes such as the reorganization of the actin cytoskeleton and in cell motility. Binds 2 calcium ions. Calcium binding is cooperative. The polypeptide is Protein S100-A6 (S100a6) (Mus musculus (Mouse)).